Reading from the N-terminus, the 174-residue chain is RNA pyrophosphohydrolase (174 aa).

The region spanning 6–149 (GYRPNVGIIL…KRDVYLGALK (144 aa)) is the Nudix hydrolase domain. Positions 38 to 59 (GGIKPGESPETAMYRELYEEVG) match the Nudix box motif.

This sequence belongs to the Nudix hydrolase family. RppH subfamily. It depends on a divalent metal cation as a cofactor.

Functionally, accelerates the degradation of transcripts by removing pyrophosphate from the 5'-end of triphosphorylated RNA, leading to a more labile monophosphorylated state that can stimulate subsequent ribonuclease cleavage. This Neisseria meningitidis serogroup C / serotype 2a (strain ATCC 700532 / DSM 15464 / FAM18) protein is RNA pyrophosphohydrolase.